The chain runs to 418 residues: Gamma-glutamyl phosphate reductase (418 aa).

Belongs to the gamma-glutamyl phosphate reductase family.

The protein localises to the cytoplasm. It catalyses the reaction L-glutamate 5-semialdehyde + phosphate + NADP(+) = L-glutamyl 5-phosphate + NADPH + H(+). The protein operates within amino-acid biosynthesis; L-proline biosynthesis; L-glutamate 5-semialdehyde from L-glutamate: step 2/2. Catalyzes the NADPH-dependent reduction of L-glutamate 5-phosphate into L-glutamate 5-semialdehyde and phosphate. The product spontaneously undergoes cyclization to form 1-pyrroline-5-carboxylate. The sequence is that of Gamma-glutamyl phosphate reductase from Histophilus somni (strain 2336) (Haemophilus somnus).